We begin with the raw amino-acid sequence, 103 residues long: Large ribosomal subunit protein uL24 (103 aa).

The protein belongs to the universal ribosomal protein uL24 family. In terms of assembly, part of the 50S ribosomal subunit.

In terms of biological role, one of two assembly initiator proteins, it binds directly to the 5'-end of the 23S rRNA, where it nucleates assembly of the 50S subunit. Its function is as follows. One of the proteins that surrounds the polypeptide exit tunnel on the outside of the subunit. The protein is Large ribosomal subunit protein uL24 of Bacillus licheniformis (strain ATCC 14580 / DSM 13 / JCM 2505 / CCUG 7422 / NBRC 12200 / NCIMB 9375 / NCTC 10341 / NRRL NRS-1264 / Gibson 46).